The sequence spans 148 residues: Transcription antitermination protein NusB (148 aa).

The protein belongs to the NusB family.

Its function is as follows. Involved in transcription antitermination. Required for transcription of ribosomal RNA (rRNA) genes. Binds specifically to the boxA antiterminator sequence of the ribosomal RNA (rrn) operons. The chain is Transcription antitermination protein NusB from Nitrosococcus oceani (strain ATCC 19707 / BCRC 17464 / JCM 30415 / NCIMB 11848 / C-107).